The primary structure comprises 473 residues: Cell division protein FtsP (473 aa).

Residues 1–27 (MSFSRRQFLQASGLAVCLGSLSSSVRA) constitute a signal peptide (tat-type signal).

It belongs to the FtsP family. Post-translationally, predicted to be exported by the Tat system. The position of the signal peptide cleavage has not been experimentally proven.

It localises to the periplasm. In terms of biological role, cell division protein that is required for growth during stress conditions. May be involved in protecting or stabilizing the divisomal assembly under conditions of stress. The protein is Cell division protein FtsP of Proteus mirabilis (strain HI4320).